The chain runs to 121 residues: Peptidyl-tRNA hydrolase (121 aa).

It belongs to the PTH2 family.

The protein resides in the cytoplasm. It catalyses the reaction an N-acyl-L-alpha-aminoacyl-tRNA + H2O = an N-acyl-L-amino acid + a tRNA + H(+). Its function is as follows. The natural substrate for this enzyme may be peptidyl-tRNAs which drop off the ribosome during protein synthesis. This chain is Peptidyl-tRNA hydrolase, found in Sulfurisphaera tokodaii (strain DSM 16993 / JCM 10545 / NBRC 100140 / 7) (Sulfolobus tokodaii).